A 491-amino-acid polypeptide reads, in one-letter code: MKNQDQALIFEMSKEGRVGYSLPQLDVEEVKLEDVFESNYIRAEDAELPEVSELDIMRHYTALSNRNHGVDSGFYPLGSCTMKYNPKINENVARFPGFANIHPLQDEKTVQGAMELMYDLQEHLVEITGMDAVTLQPAAGAHGEWTGLMLIRAYHEANGDHNRTKVIVPDSAHGTNPASATVAGFETITVKSNEHGLVDLEDLKRVVNEETAALMLTNPNTLGLFEENILEMAEIVHNAGGKLYYDGANLNAVLSQARPGDMGFDVVHLNLHKTFTGPHGGGGPGSGPVGVKEDLIPFLPKPILEKTENGYHFNYDRPQAIGRVKPFYGNFGINVRAYTYIRSMGPDGLRAVTENAVLNANYMMRRLAPYYDLPFDRHCKHEFVLSGRCQKKLGVRTLDIAKRLLDFGYHPPTIYFPLNVEECIMIEPTETESKETLDGFIDKMIQIAKEAKENPEIVQEAPHTTVITRLDETMAARKPILRYQKPTPVQV.

Lys273 carries the N6-(pyridoxal phosphate)lysine modification.

It belongs to the GcvP family. C-terminal subunit subfamily. The glycine cleavage system is composed of four proteins: P, T, L and H. In this organism, the P 'protein' is a heterodimer of two subunits. Requires pyridoxal 5'-phosphate as cofactor.

The enzyme catalyses N(6)-[(R)-lipoyl]-L-lysyl-[glycine-cleavage complex H protein] + glycine + H(+) = N(6)-[(R)-S(8)-aminomethyldihydrolipoyl]-L-lysyl-[glycine-cleavage complex H protein] + CO2. The glycine cleavage system catalyzes the degradation of glycine. The P protein binds the alpha-amino group of glycine through its pyridoxal phosphate cofactor; CO(2) is released and the remaining methylamine moiety is then transferred to the lipoamide cofactor of the H protein. In Bacillus cytotoxicus (strain DSM 22905 / CIP 110041 / 391-98 / NVH 391-98), this protein is Probable glycine dehydrogenase (decarboxylating) subunit 2.